The following is a 252-amino-acid chain: Large ribosomal subunit protein uL4 (252 aa).

It belongs to the universal ribosomal protein uL4 family. In terms of assembly, part of the 50S ribosomal subunit.

Functionally, one of the primary rRNA binding proteins, this protein initially binds near the 5'-end of the 23S rRNA. It is important during the early stages of 50S assembly. It makes multiple contacts with different domains of the 23S rRNA in the assembled 50S subunit and ribosome. Its function is as follows. Forms part of the polypeptide exit tunnel. This Methanococcus aeolicus (strain ATCC BAA-1280 / DSM 17508 / OCM 812 / Nankai-3) protein is Large ribosomal subunit protein uL4.